A 242-amino-acid chain; its full sequence is MDHKSPLVSWNLFGFDIVFNLSSILMILVTAFLVFLLAIICTRNLKKRPTGKQNFVEWIFDFVRGIIEGNMAWKKGGQFHFLAVTLILYIFIANMLGLPFSIVTKDHTLWWKSPTADATVTLTLSTTIILLTHFYGIKMRGTKQYLKGYVQPFWPLAIINVFEEFTSTLTLGLRLYGNIFAGEILLTLLAGLFFNEPAWGWIISIPGLIVWQAFSIFVGTIQAYIFIMLSMVYMSHKVADEH.

A run of 5 helical transmembrane segments spans residues 21–41, 83–103, 117–137, 175–195, and 198–218; these read LSSILMILVTAFLVFLLAIIC, AVTLILYIFIANMLGLPFSIV, DATVTLTLSTTIILLTHFYGI, LYGNIFAGEILLTLLAGLFFN, and AWGWIISIPGLIVWQAFSIFV.

Belongs to the ATPase A chain family. In terms of assembly, F-type ATPases have 2 components, CF(1) - the catalytic core - and CF(0) - the membrane proton channel. CF(1) has five subunits: alpha(3), beta(3), gamma(1), delta(1), epsilon(1). CF(0) has three main subunits: a(1), b(2) and c(9-12). The alpha and beta chains form an alternating ring which encloses part of the gamma chain. CF(1) is attached to CF(0) by a central stalk formed by the gamma and epsilon chains, while a peripheral stalk is formed by the delta and b chains.

Its subcellular location is the cell membrane. In terms of biological role, key component of the proton channel; it plays a direct role in the translocation of protons across the membrane. In Staphylococcus aureus (strain Newman), this protein is ATP synthase subunit a.